The following is a 227-amino-acid chain: Lipoprotein-releasing system ATP-binding protein LolD (227 aa).

The region spanning leucine 6 to alanine 227 is the ABC transporter domain. Glycine 42–serine 49 serves as a coordination point for ATP.

It belongs to the ABC transporter superfamily. Lipoprotein translocase (TC 3.A.1.125) family. The complex is composed of two ATP-binding proteins (LolD) and two transmembrane proteins (LolC and LolE).

The protein localises to the cell inner membrane. In terms of biological role, part of the ABC transporter complex LolCDE involved in the translocation of mature outer membrane-directed lipoproteins, from the inner membrane to the periplasmic chaperone, LolA. Responsible for the formation of the LolA-lipoprotein complex in an ATP-dependent manner. In Haemophilus influenzae (strain 86-028NP), this protein is Lipoprotein-releasing system ATP-binding protein LolD.